The primary structure comprises 437 residues: GTPase Der (437 aa).

EngA-type G domains lie at 3–168 (PLIA…PVQE) and 178–353 (TNLA…ENRS). GTP is bound by residues 9-16 (GRPNVGKS), 56-60 (DTGGY), 120-123 (NKVE), 184-191 (GRPNVGKS), 231-235 (DTAGL), and 296-299 (NKWD). The region spanning 354-437 (RKITTSALNR…VTVSLRFFKK (84 aa)) is the KH-like domain.

The protein belongs to the TRAFAC class TrmE-Era-EngA-EngB-Septin-like GTPase superfamily. EngA (Der) GTPase family. In terms of assembly, associates with the 50S ribosomal subunit.

Functionally, GTPase that plays an essential role in the late steps of ribosome biogenesis. The chain is GTPase Der from Chlorobium phaeobacteroides (strain DSM 266 / SMG 266 / 2430).